Here is a 99-residue protein sequence, read N- to C-terminus: Nucleoid-associated protein EbfC (99 aa).

The protein belongs to the YbaB/EbfC family. Homodimer.

Its subcellular location is the cytoplasm. The protein resides in the nucleoid. Functionally, binds to DNA and alters its conformation. May be involved in regulation of gene expression, nucleoid organization and DNA protection. In Borrelia duttonii (strain Ly), this protein is Nucleoid-associated protein EbfC.